Reading from the N-terminus, the 230-residue chain is TPR repeat-containing protein BB_0298 (230 aa).

TPR repeat units follow at residues 69-102 (ARFF…NPNN) and 183-216 (FEFL…ASTE).

The protein is TPR repeat-containing protein BB_0298 of Borreliella burgdorferi (strain ATCC 35210 / DSM 4680 / CIP 102532 / B31) (Borrelia burgdorferi).